The sequence spans 239 residues: Small ribosomal subunit protein uS2 (239 aa).

The protein belongs to the universal ribosomal protein uS2 family.

In Prochlorococcus marinus (strain MIT 9303), this protein is Small ribosomal subunit protein uS2.